Here is a 344-residue protein sequence, read N- to C-terminus: Anthranilate phosphoribosyltransferase (344 aa).

Residues Gly-80, 83–84 (GD), Thr-88, 90–93 (NIST), 108–116 (KHGNRSISS), and Ser-120 each bind 5-phospho-alpha-D-ribose 1-diphosphate. Gly-80 contacts anthranilate. Ser-92 contributes to the Mg(2+) binding site. Position 111 (Asn-111) interacts with anthranilate. Position 166 (Arg-166) interacts with anthranilate. Mg(2+) is bound by residues Asp-229 and Glu-230.

It belongs to the anthranilate phosphoribosyltransferase family. In terms of assembly, homodimer. It depends on Mg(2+) as a cofactor.

It carries out the reaction N-(5-phospho-beta-D-ribosyl)anthranilate + diphosphate = 5-phospho-alpha-D-ribose 1-diphosphate + anthranilate. Its pathway is amino-acid biosynthesis; L-tryptophan biosynthesis; L-tryptophan from chorismate: step 2/5. In terms of biological role, catalyzes the transfer of the phosphoribosyl group of 5-phosphorylribose-1-pyrophosphate (PRPP) to anthranilate to yield N-(5'-phosphoribosyl)-anthranilate (PRA). This chain is Anthranilate phosphoribosyltransferase, found in Chloroherpeton thalassium (strain ATCC 35110 / GB-78).